The following is a 136-amino-acid chain: Cytidine deaminase (136 aa).

In terms of domain architecture, CMP/dCMP-type deaminase spans 1–128 (MNRQELITEA…ELLPGAFSSE (128 aa)). 42–44 (NIE) provides a ligand contact to substrate. C53 serves as a coordination point for Zn(2+). Catalysis depends on E55, which acts as the Proton donor. Zn(2+) contacts are provided by C86 and C89.

Belongs to the cytidine and deoxycytidylate deaminase family. In terms of assembly, homotetramer. Zn(2+) is required as a cofactor.

It carries out the reaction cytidine + H2O + H(+) = uridine + NH4(+). It catalyses the reaction 2'-deoxycytidine + H2O + H(+) = 2'-deoxyuridine + NH4(+). In terms of biological role, this enzyme scavenges exogenous and endogenous cytidine and 2'-deoxycytidine for UMP synthesis. The chain is Cytidine deaminase (cdd) from Bacillus subtilis (strain 168).